A 66-amino-acid chain; its full sequence is UPF0370 protein YpfN (66 aa).

Residues 4–24 (LAKYWWILVIVFLVGVLLNVI) form a helical membrane-spanning segment. Residues 39 to 66 (KPELPPHRDFNDKWDDDDDWPKKDQPKK) are disordered. Residues 42–51 (LPPHRDFNDK) show a composition bias toward basic and acidic residues.

This sequence belongs to the UPF0370 family.

The protein resides in the cell membrane. The sequence is that of UPF0370 protein YpfN from Escherichia coli O139:H28 (strain E24377A / ETEC).